A 156-amino-acid polypeptide reads, in one-letter code: Small ribosomal subunit protein uS7c (156 aa).

Belongs to the universal ribosomal protein uS7 family. In terms of assembly, part of the 30S ribosomal subunit.

It is found in the plastid. The protein localises to the chloroplast. Functionally, one of the primary rRNA binding proteins, it binds directly to 16S rRNA where it nucleates assembly of the head domain of the 30S subunit. This Pisum sativum (Garden pea) protein is Small ribosomal subunit protein uS7c (rps7).